The following is a 228-amino-acid chain: Response regulator MprA (228 aa).

The region spanning 2-116 is the Response regulatory domain; sequence RILAVDDDRA…ELLARIRALL (115 aa). 4-aspartylphosphate is present on Asp46. The ompR/PhoB-type DNA-binding region spans 127–225; it reads SVAMSFSDLT…VRGVGYVLRE (99 aa).

Post-translationally, phosphorylated and dephosphorylated by MprB.

Its subcellular location is the cytoplasm. In terms of biological role, member of the two-component regulatory system MprB/MprA which contributes to maintaining a balance among several systems involved in stress resistance and is required for establishment and maintenance of persistent infection in the host. Functions as a transcriptional regulator that recognizes a 19-bp nucleotide motif comprizing two loosely conserved 8-bp direct DNA-binding motif repeats separated by a 3-bp spacer region. This chain is Response regulator MprA (mprA), found in Mycobacterium leprae (strain TN).